The primary structure comprises 148 residues: UPF0178 protein Mlg_1612 (148 aa).

Belongs to the UPF0178 family.

The protein is UPF0178 protein Mlg_1612 of Alkalilimnicola ehrlichii (strain ATCC BAA-1101 / DSM 17681 / MLHE-1).